Here is a 527-residue protein sequence, read N- to C-terminus: Dual specificity protein kinase shkA (527 aa).

A Protein kinase domain is found at 45 to 304 (ITTESILGDG…GIVSELEEII (260 aa)). ATP-binding positions include 51 to 59 (LGDGSFGTV) and Lys-72. The Proton acceptor role is filled by Asp-167. Residues 424–513 (WFHGDISTSE…INTPCLGSRF (90 aa)) enclose the SH2 domain.

This sequence belongs to the protein kinase superfamily. TKL Ser/Thr protein kinase family. SH2 domain-containing protein kinase subfamily.

Its subcellular location is the membrane. It carries out the reaction L-seryl-[protein] + ATP = O-phospho-L-seryl-[protein] + ADP + H(+). The enzyme catalyses L-threonyl-[protein] + ATP = O-phospho-L-threonyl-[protein] + ADP + H(+). Its function is as follows. Required for proper chemotaxis and phagocytosis; proper spatiotemporal control of F-actin levels in chemotaxing cells. Negative regulator of the PI3K (phosphatidylinositol 3 kinase) pathway. Predominantly phosphorylates serines and threonines and tyrosines at a lower level. The chain is Dual specificity protein kinase shkA (shkA) from Dictyostelium discoideum (Social amoeba).